Here is a 367-residue protein sequence, read N- to C-terminus: Multifunctional tryptophan biosynthesis protein (367 aa).

Positions 7 to 201 constitute a Glutamine amidotransferase type-1 domain; the sequence is NVVMIDNYDS…LNVSGGYWEE (195 aa). An L-glutamine-binding site is contributed by 58–60; the sequence is GPG. Cys-86 acts as the Nucleophile; for GATase activity in catalysis. L-glutamine is bound by residues Gln-90 and 136-137; that span reads SL. Residues His-175 and Glu-177 each act as for GATase activity in the active site. The indole-3-glycerol phosphate synthase stretch occupies residues 209-367; the sequence is RKESILEKIY…TVLLIVKMLS (159 aa).

As to quaternary structure, tetramer of two components I and two components II.

It carries out the reaction chorismate + L-glutamine = anthranilate + pyruvate + L-glutamate + H(+). The enzyme catalyses 1-(2-carboxyphenylamino)-1-deoxy-D-ribulose 5-phosphate + H(+) = (1S,2R)-1-C-(indol-3-yl)glycerol 3-phosphate + CO2 + H2O. The protein operates within amino-acid biosynthesis; L-tryptophan biosynthesis; L-tryptophan from chorismate: step 1/5. It participates in amino-acid biosynthesis; L-tryptophan biosynthesis; L-tryptophan from chorismate: step 4/5. This chain is Multifunctional tryptophan biosynthesis protein, found in Pichia angusta (Yeast).